The primary structure comprises 179 residues: Adenine phosphoribosyltransferase (179 aa).

Belongs to the purine/pyrimidine phosphoribosyltransferase family. Homodimer.

It is found in the cytoplasm. The catalysed reaction is AMP + diphosphate = 5-phospho-alpha-D-ribose 1-diphosphate + adenine. It participates in purine metabolism; AMP biosynthesis via salvage pathway; AMP from adenine: step 1/1. Functionally, catalyzes a salvage reaction resulting in the formation of AMP, that is energically less costly than de novo synthesis. The polypeptide is Adenine phosphoribosyltransferase (Mycolicibacterium gilvum (strain PYR-GCK) (Mycobacterium gilvum (strain PYR-GCK))).